We begin with the raw amino-acid sequence, 213 residues long: V-type ATP synthase subunit D (213 aa).

The protein belongs to the V-ATPase D subunit family.

Functionally, produces ATP from ADP in the presence of a proton gradient across the membrane. This chain is V-type ATP synthase subunit D, found in Clostridium botulinum (strain Alaska E43 / Type E3).